Consider the following 424-residue polypeptide: Serine--tRNA ligase (424 aa).

Residue 231-233 (TAE) participates in L-serine binding. Residue 262-264 (RSE) participates in ATP binding. Glu-285 contacts L-serine. Residue 349–352 (EISS) coordinates ATP. Position 385 (Ser-385) interacts with L-serine.

It belongs to the class-II aminoacyl-tRNA synthetase family. Type-1 seryl-tRNA synthetase subfamily. As to quaternary structure, homodimer. The tRNA molecule binds across the dimer.

Its subcellular location is the cytoplasm. The catalysed reaction is tRNA(Ser) + L-serine + ATP = L-seryl-tRNA(Ser) + AMP + diphosphate + H(+). It catalyses the reaction tRNA(Sec) + L-serine + ATP = L-seryl-tRNA(Sec) + AMP + diphosphate + H(+). The protein operates within aminoacyl-tRNA biosynthesis; selenocysteinyl-tRNA(Sec) biosynthesis; L-seryl-tRNA(Sec) from L-serine and tRNA(Sec): step 1/1. Functionally, catalyzes the attachment of serine to tRNA(Ser). Is also able to aminoacylate tRNA(Sec) with serine, to form the misacylated tRNA L-seryl-tRNA(Sec), which will be further converted into selenocysteinyl-tRNA(Sec). In Bacillus cytotoxicus (strain DSM 22905 / CIP 110041 / 391-98 / NVH 391-98), this protein is Serine--tRNA ligase.